The primary structure comprises 1349 residues: Spike glycoprotein (1349 aa).

The first 13 residues, 1 to 13 (MFFILLITLPSVF), serve as a signal peptide directing secretion. Residues 14 to 1293 (AVIGDLKCNT…GTYEYYVKWP (1280 aa)) lie on the Extracellular side of the membrane. One can recognise a BetaCoV S1-NTD domain in the interval 15–298 (VIGDLKCNTS…DFMSEIMCKT (284 aa)). Disulfide bonds link cysteine 21–cysteine 165, cysteine 160–cysteine 193, cysteine 172–cysteine 252, cysteine 286–cysteine 296, cysteine 331–cysteine 356, cysteine 374–cysteine 427, and cysteine 386–cysteine 601. N-linked (GlcNAc...) asparagine; by host glycans are attached at residues asparagine 22, asparagine 59, and asparagine 133. A glycan (N-linked (GlcNAc...) asparagine; by host) is linked at asparagine 198. The BetaCoV S1-CTD domain occupies 329 to 603 (PNCDIEAWLN…DVNSGTTCST (275 aa)). Asparagine 437, asparagine 456, asparagine 512, asparagine 611, asparagine 635, asparagine 662, asparagine 682, asparagine 700, asparagine 725, asparagine 774, and asparagine 881 each carry an N-linked (GlcNAc...) asparagine; by host glycan. 2 fusion peptide regions span residues 900-921 (SAIEDLLFDKVKLSDVGFVQAY) and 919-939 (QAYNNCTGGAEIRDLICVQSY). Residue asparagine 923 is glycosylated (N-linked (GlcNAc...) asparagine; by host). A disulfide bridge connects residues cysteine 924 and cysteine 935. The tract at residues 1000–1050 (QKLIASAFNNALDSIQEGFDATNSALVKIQAVVNANAEALNNLLQQLSNRF) is heptad repeat 1. The stretch at 1029–1073 (QAVVNANAEALNNLLQQLSNRFGAISASLQEILSRLDALEAKAQI) forms a coiled coil. Asparagine 1180, asparagine 1210, asparagine 1220, asparagine 1239, asparagine 1253, and asparagine 1274 each carry an N-linked (GlcNAc...) asparagine; by host glycan. Positions 1244–1282 (APDLSFDYINVTFLDLQDEMNRLQEAIKVLNHSYINLKD) are heptad repeat 2. A coiled-coil region spans residues 1255–1283 (TFLDLQDEMNRLQEAIKVLNHSYINLKDI). The chain crosses the membrane as a helical span at residues 1294-1314 (WYVWLLICLAGVVMLVLLFFI). Residues 1315-1349 (CCCTGCGTSCFKKCGGCFDDYTGHQEFVIKTSHDD) lie on the Cytoplasmic side of the membrane. The KxHxx signature appears at 1345-1349 (TSHDD).

This sequence belongs to the betacoronaviruses spike protein family. Homotrimer; each monomer consists of a S1 and a S2 subunit. The resulting peplomers protrude from the virus surface as spikes. Specific enzymatic cleavages in vivo yield mature proteins. The precursor is processed into S1 and S2 by host cell furin or another cellular protease to yield the mature S1 and S2 proteins. Additionally, a second cleavage leads to the release of a fusion peptide after viral attachment to host cell receptor. In terms of processing, the cytoplasmic Cys-rich domain is palmitoylated. Spike glycoprotein is digested within host endosomes.

Its subcellular location is the virion membrane. The protein localises to the host endoplasmic reticulum-Golgi intermediate compartment membrane. It localises to the host cell membrane. In terms of biological role, attaches the virion to the cell membrane by interacting with host receptor, initiating the infection. Its function is as follows. Mediates fusion of the virion and cellular membranes by acting as a class I viral fusion protein. Under the current model, the protein has at least three conformational states: pre-fusion native state, pre-hairpin intermediate state, and post-fusion hairpin state. During viral and target cell membrane fusion, the coiled coil regions (heptad repeats) assume a trimer-of-hairpins structure, positioning the fusion peptide in close proximity to the C-terminal region of the ectodomain. The formation of this structure appears to drive apposition and subsequent fusion of viral and target cell membranes. Functionally, acts as a viral fusion peptide which is unmasked following S2 cleavage occurring upon virus endocytosis. This Porcine hemagglutinating encephalomyelitis virus (strain IAF-404) (HEV) protein is Spike glycoprotein.